Reading from the N-terminus, the 376-residue chain is Phosphate-binding protein (376 aa).

Intrachain disulfides connect C113–C158 and C306–C369.

As to quaternary structure, heterooligomer with human PON1. Found in human plasma.

The protein resides in the secreted. Its function is as follows. Phosphate-binding protein. The sequence is that of Phosphate-binding protein from Unknown prokaryotic organism.